A 211-amino-acid polypeptide reads, in one-letter code: Large ribosomal subunit protein uL3 (211 aa).

Gln-150 is modified (N5-methylglutamine).

The protein belongs to the universal ribosomal protein uL3 family. As to quaternary structure, part of the 50S ribosomal subunit. Forms a cluster with proteins L14 and L19. In terms of processing, methylated by PrmB.

Functionally, one of the primary rRNA binding proteins, it binds directly near the 3'-end of the 23S rRNA, where it nucleates assembly of the 50S subunit. In Pseudomonas fluorescens (strain Pf0-1), this protein is Large ribosomal subunit protein uL3.